A 355-amino-acid polypeptide reads, in one-letter code: Elongation factor Ts (355 aa).

The interval 82 to 85 is involved in Mg(2+) ion dislocation from EF-Tu; it reads TDFV.

This sequence belongs to the EF-Ts family.

It is found in the cytoplasm. In terms of biological role, associates with the EF-Tu.GDP complex and induces the exchange of GDP to GTP. It remains bound to the aminoacyl-tRNA.EF-Tu.GTP complex up to the GTP hydrolysis stage on the ribosome. This Helicobacter pylori (strain J99 / ATCC 700824) (Campylobacter pylori J99) protein is Elongation factor Ts (tsf).